The sequence spans 675 residues: UvrABC system protein B (675 aa).

One can recognise a Helicase ATP-binding domain in the interval 35-192 (QGMRDGLMYQ…ARLVAMQYTR (158 aa)). 48 to 55 (GVTGSGKT) contributes to the ATP binding site. The short motif at 101 to 124 (YYDYYQPEAYVPTRDLFIEKDSSI) is the Beta-hairpin element. The region spanning 439–605 (QVDDLLGEIK…GVNKAVRELI (167 aa)) is the Helicase C-terminal domain. Positions 633-668 (AREIRRLEKLMTDHARNLEFEQAAAARDALNALKQR) constitute a UVR domain.

It belongs to the UvrB family. As to quaternary structure, forms a heterotetramer with UvrA during the search for lesions. Interacts with UvrC in an incision complex.

It localises to the cytoplasm. Functionally, the UvrABC repair system catalyzes the recognition and processing of DNA lesions. A damage recognition complex composed of 2 UvrA and 2 UvrB subunits scans DNA for abnormalities. Upon binding of the UvrA(2)B(2) complex to a putative damaged site, the DNA wraps around one UvrB monomer. DNA wrap is dependent on ATP binding by UvrB and probably causes local melting of the DNA helix, facilitating insertion of UvrB beta-hairpin between the DNA strands. Then UvrB probes one DNA strand for the presence of a lesion. If a lesion is found the UvrA subunits dissociate and the UvrB-DNA preincision complex is formed. This complex is subsequently bound by UvrC and the second UvrB is released. If no lesion is found, the DNA wraps around the other UvrB subunit that will check the other stand for damage. The sequence is that of UvrABC system protein B from Bordetella petrii (strain ATCC BAA-461 / DSM 12804 / CCUG 43448).